We begin with the raw amino-acid sequence, 142 residues long: Large ribosomal subunit protein uL11 (142 aa).

This sequence belongs to the universal ribosomal protein uL11 family. As to quaternary structure, part of the ribosomal stalk of the 50S ribosomal subunit. Interacts with L10 and the large rRNA to form the base of the stalk. L10 forms an elongated spine to which L12 dimers bind in a sequential fashion forming a multimeric L10(L12)X complex. Post-translationally, one or more lysine residues are methylated.

Functionally, forms part of the ribosomal stalk which helps the ribosome interact with GTP-bound translation factors. The sequence is that of Large ribosomal subunit protein uL11 from Magnetococcus marinus (strain ATCC BAA-1437 / JCM 17883 / MC-1).